Reading from the N-terminus, the 98-residue chain is Large ribosomal subunit protein uL23 (98 aa).

It belongs to the universal ribosomal protein uL23 family. In terms of assembly, part of the 50S ribosomal subunit. Contacts protein L29, and trigger factor when it is bound to the ribosome.

In terms of biological role, one of the early assembly proteins it binds 23S rRNA. One of the proteins that surrounds the polypeptide exit tunnel on the outside of the ribosome. Forms the main docking site for trigger factor binding to the ribosome. This Hahella chejuensis (strain KCTC 2396) protein is Large ribosomal subunit protein uL23.